The chain runs to 367 residues: Probable dual-specificity RNA methyltransferase RlmN (367 aa).

The Proton acceptor role is filled by Glu92. Positions 98–326 constitute a Radical SAM core domain; that stretch reads QEYGLSVCVT…YDTLKKNGIN (229 aa). The cysteines at positions 105 and 341 are disulfide-linked. Positions 112, 116, and 119 each coordinate [4Fe-4S] cluster. S-adenosyl-L-methionine contacts are provided by residues 164–165, Ser196, 219–221, and Asn297; these read GE and SLH. Cys341 serves as the catalytic S-methylcysteine intermediate.

It belongs to the radical SAM superfamily. RlmN family. [4Fe-4S] cluster serves as cofactor.

It is found in the cytoplasm. It catalyses the reaction adenosine(2503) in 23S rRNA + 2 reduced [2Fe-2S]-[ferredoxin] + 2 S-adenosyl-L-methionine = 2-methyladenosine(2503) in 23S rRNA + 5'-deoxyadenosine + L-methionine + 2 oxidized [2Fe-2S]-[ferredoxin] + S-adenosyl-L-homocysteine. The enzyme catalyses adenosine(37) in tRNA + 2 reduced [2Fe-2S]-[ferredoxin] + 2 S-adenosyl-L-methionine = 2-methyladenosine(37) in tRNA + 5'-deoxyadenosine + L-methionine + 2 oxidized [2Fe-2S]-[ferredoxin] + S-adenosyl-L-homocysteine. Functionally, specifically methylates position 2 of adenine 2503 in 23S rRNA and position 2 of adenine 37 in tRNAs. This is Probable dual-specificity RNA methyltransferase RlmN from Listeria monocytogenes serovar 1/2a (strain ATCC BAA-679 / EGD-e).